The following is a 63-amino-acid chain: UPF0434 protein Mmar10_2939 (63 aa).

This sequence belongs to the UPF0434 family.

The protein is UPF0434 protein Mmar10_2939 of Maricaulis maris (strain MCS10) (Caulobacter maris).